The primary structure comprises 188 residues: Calcium load-activated calcium channel (188 aa).

At 1 to 4 (MSTM) the chain is on the lumenal side. Residues 5–32 (FADTLLIVFISVCTALLAEGITWVLVYR) form a helical membrane-spanning segment. Residues 32 to 89 (RTDKYKRLKAEVEKQSKKLEKKKETITESAGRQQKKKIERQEEKLKNNNRDLSMVRMK) are a coiled coil. Topologically, residues 33–86 (TDKYKRLKAEVEKQSKKLEKKKETITESAGRQQKKKIERQEEKLKNNNRDLSMV) are cytoplasmic. Phosphoserine is present on S60. The chain crosses the membrane as a helical span at residues 87 to 106 (RMKSMFAIGFCFTALMGMFN). Topologically, residues 107–120 (SIFDGRVVAKLPFT) are lumenal. An intramembrane segment occupies 121–130 (PLSYIQGLSH). Topologically, residues 131–140 (RNLLGDDTTD) are lumenal. Residues 141-162 (CSFIFLYILCTMSIRQNIQKIL) form a helical membrane-spanning segment. At 163–188 (GLAPSRAATKQAGGFLGPPPPSGKFS) the chain is on the cytoplasmic side. S188 carries the phosphoserine modification.

The protein belongs to the TMCO1 family. As to quaternary structure, homodimer and homotetramer. Homodimer under resting conditions; forms homotetramers following ER calcium overload. Component of the GET- and EMC-like (GEL) complex, composed of RAB5IF/OPTI and TMCO1. The GEL complex is part of the multi-pass translocon (MPT) complex, composed of three subcomplexes, the GEL complex (composed of RAB5IF/OPTI and TMCO1), the BOS complex (composed of NCLN/Nicalin, NOMO1 and TMEM147) and the PAT complex (composed of WDR83OS/Asterix and CCDC47). The MPT complex associates with the SEC61 complex.

It is found in the endoplasmic reticulum membrane. It localises to the golgi apparatus membrane. Its subcellular location is the mitochondrion membrane. The enzyme catalyses Ca(2+)(in) = Ca(2+)(out). In terms of biological role, endoplasmic reticulum (ER) calcium-selective channel preventing intracellular Ca2(+) stores from overfilling and maintaining calcium homeostasis in the ER. In response to endoplasmic reticulum (ER) Ca2(+) overloading, assembles into a homotetramer, forming a functional calcium-selective channel facilitating Ca2(+) release. Mediates ER Ca2(+) homeostasis in osteoblasts and plays a key role in bone formation, via the CaMKII-HDAC4-RUNX2 signaling axis. Component of the multi-pass translocon (MPT) complex that mediates insertion of multi-pass membrane proteins into the lipid bilayer of membranes. The MPT complex takes over after the SEC61 complex: following membrane insertion of the first few transmembrane segments of proteins by the SEC61 complex, the MPT complex occludes the lateral gate of the SEC61 complex to promote insertion of subsequent transmembrane regions. Within the MPT complex, the GEL subcomplex may mediate insertion of transmembrane regions into the membrane. The chain is Calcium load-activated calcium channel from Bos taurus (Bovine).